Here is a 247-residue protein sequence, read N- to C-terminus: MTDQDSTYRPRSPDLSTFQSSIPPAVNSPIYPLASPLAHRASYDASPFFAPQYQQPPAPLGRVPQQYIPPFVDPNSPLSPDMARRSSRLARATEVAPMPEVSYAQPVLSEEPQQLPPPPPQPNPVASIEVKTKFPVARIKRIMQADEDVGKVAQVTPIAVSKALELFMISLVTKAAKEARDRNSKRVTATHLKQAVVKDEVLDFLADIIAKVPDQPAGGRKHDDDGSDQNEQPKRKRGGRRPKDDSD.

Over residues 1-12 the composition is skewed to basic and acidic residues; the sequence is MTDQDSTYRPRS. Disordered stretches follow at residues 1–31, 48–82, and 212–247; these read MTDQDSTYRPRSPDLSTFQSSIPPAVNSPIY, FFAPQYQQPPAPLGRVPQQYIPPFVDPNSPLSPDM, and VPDQPAGGRKHDDDGSDQNEQPKRKRGGRRPKDDSD. The span at 13–22 shows a compositional bias: polar residues; the sequence is PDLSTFQSSI.

This sequence belongs to the NC2 alpha/DRAP1 family. As to quaternary structure, forms the NCT transcriptional regulatory complex with nctB and mot1.

The protein localises to the nucleus. In terms of biological role, part of the NCT transcriptional regulatory complex that acts as a key regulator of ergosterol biosynthesis and the azole exporter cdr1B. The NCT complex binds the promoters of genes linked to azole susceptibility, and especially represses the expression of cdr1B transporter. The protein is NCT transcriptional regulatory complex subunit A of Aspergillus fumigatus (strain CBS 144.89 / FGSC A1163 / CEA10) (Neosartorya fumigata).